We begin with the raw amino-acid sequence, 123 residues long: Large ribosomal subunit protein bL12 (123 aa).

Belongs to the bacterial ribosomal protein bL12 family. As to quaternary structure, homodimer. Part of the ribosomal stalk of the 50S ribosomal subunit. Forms a multimeric L10(L12)X complex, where L10 forms an elongated spine to which 2 to 4 L12 dimers bind in a sequential fashion. Binds GTP-bound translation factors.

Its function is as follows. Forms part of the ribosomal stalk which helps the ribosome interact with GTP-bound translation factors. Is thus essential for accurate translation. In Mycoplasmopsis synoviae (strain 53) (Mycoplasma synoviae), this protein is Large ribosomal subunit protein bL12.